Reading from the N-terminus, the 286-residue chain is Zinc finger protein ZAT5 (286 aa).

Disordered stretches follow at residues 1 to 28 (MMMG…RSSS), 40 to 60 (STSS…EYNS), and 131 to 171 (GGHR…FKVS). The C2H2-type 1 zinc-finger motif lies at 115–137 (YECKTCNRTFSSFQALGGHRASH). Residues 154-171 (QPKSSASEEGQNSHFKVS) are compositionally biased toward polar residues. The C2H2-type 2 zinc-finger motif lies at 190-212 (HECSICGSEFTSGQALGGHMRRH).

As to expression, expressed in flowers and siliques.

Its subcellular location is the nucleus. Its function is as follows. Probable transcription factor that may be involved in stress responses. The protein is Zinc finger protein ZAT5 (ZAT5) of Arabidopsis thaliana (Mouse-ear cress).